The following is a 97-amino-acid chain: Co-chaperonin GroES (97 aa).

Belongs to the GroES chaperonin family. Heptamer of 7 subunits arranged in a ring. Interacts with the chaperonin GroEL.

It is found in the cytoplasm. Its function is as follows. Together with the chaperonin GroEL, plays an essential role in assisting protein folding. The GroEL-GroES system forms a nano-cage that allows encapsulation of the non-native substrate proteins and provides a physical environment optimized to promote and accelerate protein folding. GroES binds to the apical surface of the GroEL ring, thereby capping the opening of the GroEL channel. This is Co-chaperonin GroES from Wigglesworthia glossinidia brevipalpis.